A 318-amino-acid polypeptide reads, in one-letter code: Ribose-phosphate pyrophosphokinase 1 (318 aa).

ATP is bound by residues 43-45 (DGE) and 102-103 (RQ). Positions 136 and 176 each coordinate Mg(2+). Lys199 is an active-site residue. D-ribose 5-phosphate is bound by residues Arg201, Asp225, and 229 to 233 (DTAGT).

The protein belongs to the ribose-phosphate pyrophosphokinase family. Class I subfamily. Homohexamer. The cofactor is Mg(2+).

The protein localises to the cytoplasm. It catalyses the reaction D-ribose 5-phosphate + ATP = 5-phospho-alpha-D-ribose 1-diphosphate + AMP + H(+). It functions in the pathway metabolic intermediate biosynthesis; 5-phospho-alpha-D-ribose 1-diphosphate biosynthesis; 5-phospho-alpha-D-ribose 1-diphosphate from D-ribose 5-phosphate (route I): step 1/1. Involved in the biosynthesis of the central metabolite phospho-alpha-D-ribosyl-1-pyrophosphate (PRPP) via the transfer of pyrophosphoryl group from ATP to 1-hydroxyl of ribose-5-phosphate (Rib-5-P). The protein is Ribose-phosphate pyrophosphokinase 1 of Listeria monocytogenes serotype 4b (strain F2365).